The chain runs to 613 residues: Cleavage and polyadenylation specificity factor subunit 3-II (613 aa).

Positions 67–72 (HFHMDH) match the HXHXDH motif motif.

The protein belongs to the metallo-beta-lactamase superfamily. RNA-metabolizing metallo-beta-lactamase-like family. INTS11 subfamily. In terms of assembly, component of the CPSF complex, at least composed of CPSF160, CPSF100, CPSF73-I, CPSF73-II, CPSF30, FY and FIPS5. Interacts with CPSF30, CPSF100, CPSF160 and FY. In terms of tissue distribution, highly expressed in senescence leaves, petals, stamens, pollen and late stages of siliques with seeds. Also detected in roots, stems, leaves and seedlings.

Its subcellular location is the nucleus. Its function is as follows. Component of the cleavage and polyadenylation specificity factor (CPSF) complex that play a key role in pre-mRNA 3'-end formation, recognizing the AAUAAA signal sequence and interacting with poly(A) polymerase and other factors to bring about cleavage and poly(A) addition. May function as mRNA 3'-end-processing endonuclease and also be involved in the histone 3'-end pre-mRNA processing. The sequence is that of Cleavage and polyadenylation specificity factor subunit 3-II (CPSF73-II) from Arabidopsis thaliana (Mouse-ear cress).